Here is a 69-residue protein sequence, read N- to C-terminus: Protein transport protein Sec61 subunit gamma-3 (69 aa).

At Met1 the chain carries N-acetylmethionine. The Cytoplasmic segment spans residues 1–32 (MEAIDSAIDPLRDFAKSSVRLVQRCHKPDRKE). The helical transmembrane segment at 33–61 (FTKVAVRTAIGFVVMGFVGFFVKLVFIPI) threads the bilayer. Over 62 to 69 (NNIIVGSS) the chain is Extracellular.

Belongs to the SecE/SEC61-gamma family. Heterotrimeric complex composed of SEC61-alpha, SEC61-beta and SEC61-gamma.

It localises to the endoplasmic reticulum membrane. Its function is as follows. Necessary for protein translocation in the endoplasmic reticulum. This Arabidopsis thaliana (Mouse-ear cress) protein is Protein transport protein Sec61 subunit gamma-3 (SEC61G3).